Here is a 201-residue protein sequence, read N- to C-terminus: Imidazole glycerol phosphate synthase subunit HisH 1 (201 aa).

The Glutamine amidotransferase type-1 domain occupies 1–201 (MIALIDYKAG…LKLLENFARL (201 aa)). The active-site Nucleophile is C80. Catalysis depends on residues H183 and E185.

Heterodimer of HisH and HisF.

The protein resides in the cytoplasm. The enzyme catalyses 5-[(5-phospho-1-deoxy-D-ribulos-1-ylimino)methylamino]-1-(5-phospho-beta-D-ribosyl)imidazole-4-carboxamide + L-glutamine = D-erythro-1-(imidazol-4-yl)glycerol 3-phosphate + 5-amino-1-(5-phospho-beta-D-ribosyl)imidazole-4-carboxamide + L-glutamate + H(+). It catalyses the reaction L-glutamine + H2O = L-glutamate + NH4(+). Its pathway is amino-acid biosynthesis; L-histidine biosynthesis; L-histidine from 5-phospho-alpha-D-ribose 1-diphosphate: step 5/9. Functionally, IGPS catalyzes the conversion of PRFAR and glutamine to IGP, AICAR and glutamate. The HisH subunit provides the glutamine amidotransferase activity that produces the ammonia necessary to HisF for the synthesis of IGP and AICAR. This is Imidazole glycerol phosphate synthase subunit HisH 1 (hisH1) from Campylobacter jejuni subsp. jejuni serotype O:23/36 (strain 81-176).